Consider the following 157-residue polypeptide: Transcription elongation factor GreA (157 aa).

The stretch at 9–30 forms a coiled coil; sequence LEGAQQLKEELKRRKTTDRKRI.

This sequence belongs to the GreA/GreB family.

Its function is as follows. Necessary for efficient RNA polymerase transcription elongation past template-encoded arresting sites. The arresting sites in DNA have the property of trapping a certain fraction of elongating RNA polymerases that pass through, resulting in locked ternary complexes. Cleavage of the nascent transcript by cleavage factors such as GreA or GreB allows the resumption of elongation from the new 3'terminus. GreA releases sequences of 2 to 3 nucleotides. The polypeptide is Transcription elongation factor GreA (Magnetococcus marinus (strain ATCC BAA-1437 / JCM 17883 / MC-1)).